A 229-amino-acid polypeptide reads, in one-letter code: GTP:AMP phosphotransferase (229 aa).

A ribonucleoside 5'-triphosphate is bound at residue 10–15; that stretch reads GVGKGT. The segment at 30–59 is NMP; the sequence is NVGNILRNEIKKESNIGKEVQNVVRSGNLV. AMP is bound by residues arginine 36, 57 to 59, glycine 87, 87 to 90, and glutamine 94; these read NLV and GFPR. The tract at residues 123-170 is LID; the sequence is GRRICNICDKNFNVSNIQQDSFDMPPILPSKDCIQCNGHTNLIKRKDD. Arginine 178 is a binding site for AMP.

Belongs to the adenylate kinase family.

The protein resides in the mitochondrion. It catalyses the reaction a ribonucleoside 5'-triphosphate + AMP = a ribonucleoside 5'-diphosphate + ADP. The catalysed reaction is GTP + AMP = GDP + ADP. Inhibited by the dinucleoside pentaphosphate compound P1,P5-di(guanosine-5') pentaphosphate (GP5A). Catalyzes the reversible transfer of the terminal phosphate group between GTP and AMP. Has very low activity with UTP, ITP, CTP and IMP and no activity with ATP, GMP, CMP and UMP in vitro. The chain is GTP:AMP phosphotransferase from Plasmodium falciparum (isolate 3D7).